The primary structure comprises 75 residues: Metallothionein-like protein 1 (75 aa).

This sequence belongs to the metallothionein superfamily. Type 15 family.

Functionally, metallothioneins have a high content of cysteine residues that bind various heavy metals. This Triticum aestivum (Wheat) protein is Metallothionein-like protein 1 (ALI1).